The primary structure comprises 297 residues: Ribosomal RNA small subunit methyltransferase A (297 aa).

S-adenosyl-L-methionine contacts are provided by N31, L33, G58, E79, D104, and N129.

It belongs to the class I-like SAM-binding methyltransferase superfamily. rRNA adenine N(6)-methyltransferase family. RsmA subfamily.

It is found in the cytoplasm. The catalysed reaction is adenosine(1518)/adenosine(1519) in 16S rRNA + 4 S-adenosyl-L-methionine = N(6)-dimethyladenosine(1518)/N(6)-dimethyladenosine(1519) in 16S rRNA + 4 S-adenosyl-L-homocysteine + 4 H(+). Functionally, specifically dimethylates two adjacent adenosines (A1518 and A1519) in the loop of a conserved hairpin near the 3'-end of 16S rRNA in the 30S particle. May play a critical role in biogenesis of 30S subunits. The sequence is that of Ribosomal RNA small subunit methyltransferase A from Staphylococcus aureus (strain bovine RF122 / ET3-1).